The chain runs to 197 residues: Probable molybdenum cofactor guanylyltransferase (197 aa).

Residues 9–11 (LAG), K21, D65, and D94 each bind GTP. Mg(2+) is bound at residue D94.

The protein belongs to the MobA family. Requires Mg(2+) as cofactor.

It localises to the cytoplasm. The catalysed reaction is Mo-molybdopterin + GTP + H(+) = Mo-molybdopterin guanine dinucleotide + diphosphate. In terms of biological role, transfers a GMP moiety from GTP to Mo-molybdopterin (Mo-MPT) cofactor (Moco or molybdenum cofactor) to form Mo-molybdopterin guanine dinucleotide (Mo-MGD) cofactor. The sequence is that of Probable molybdenum cofactor guanylyltransferase from Carboxydothermus hydrogenoformans (strain ATCC BAA-161 / DSM 6008 / Z-2901).